We begin with the raw amino-acid sequence, 459 residues long: cAMP-dependent protein kinase regulatory subunit (459 aa).

Residues 30–219 are dimerization and phosphorylation; that stretch reads QFCANYFNTK…TLANNLKNNF (190 aa). 2 disordered regions span residues 78–109 and 125–168; these read VNDRQPSFKSPFGVNDPHSNHDEDPHAKDTKT and FDVK…PSSK. Over residues 95–109 the composition is skewed to basic and acidic residues; it reads HSNHDEDPHAKDTKT. The span at 146–168 shows a compositional bias: low complexity; the sequence is KPSSSSQPNQQSASASSKTPSSK. Serine 180 bears the Phosphoserine mark. 3',5'-cyclic AMP-binding positions include 220–335, glutamate 285, arginine 294, 338–454, glutamate 404, and arginine 413; these read LFKQ…FLKD and VLKS…KSQD.

The protein belongs to the cAMP-dependent kinase regulatory chain family. In terms of assembly, tetramer, composed of 2 regulatory (R) and 2 catalytic (C) subunits. In the presence of cAMP it dissociates into 2 active monomeric C subunits and an R dimer.

This is cAMP-dependent protein kinase regulatory subunit (BCY1) from Candida albicans (strain SC5314 / ATCC MYA-2876) (Yeast).